The primary structure comprises 167 residues: MAALPAESDTSERIKVSIADYAVAEAGTISTSGLGSCLGLAIYDPEAGVSALVHPMLPRRDGNDDRPPERFVDSGIDVVVDALLEHGASKASLRAKIAGGAAVVDFGSDDGDSIGDRNIEVAREELSDRGIELVGEEVGGDCGRTVKVDAATGDVNVSRTDGEETTL.

It belongs to the CheD family.

The enzyme catalyses L-glutaminyl-[protein] + H2O = L-glutamyl-[protein] + NH4(+). Probably deamidates glutamine residues to glutamate on methyl-accepting chemotaxis receptors (MCPs), playing an important role in chemotaxis. This Natronomonas pharaonis (strain ATCC 35678 / DSM 2160 / CIP 103997 / JCM 8858 / NBRC 14720 / NCIMB 2260 / Gabara) (Halobacterium pharaonis) protein is Probable chemoreceptor glutamine deamidase CheD.